The primary structure comprises 538 residues: MSPRKYVIVTGGVLSSVGKGLTTASLALLLSSRGYSVEAIKIDPYINVDAGTMNPYMHGEVFVTEDGGETDLDIGHYERFLGKNLSRKHNITTGQIYFSVISKERSGDYLGQTVQVIPHITDEIKSRIKEVGDVSGADVVIVEIGGTVGDIEGLPFLEAARQMRLEEGFDNTFFIHVALSPYLPTTGEQKTKPVQHSIQELRRIGIQPDAVVVRSHQPLEQEGLRKIALYATLPMENVINSYDIENIYRLPLLLEKQGLARLVERRLFGRETRPDLSRWEEFVALYEKASRRVKVAMVGKYTKLRDSYISIVEALKHASAYEGVRPELLWVESTDIERGVVDVDRVFEEADGAIVLPGFGVRGVEGKIEAIRRFREGKKPMLGICFGMQLSVVEYARNVLGLKEAHTTEVNPETPHPVVDLLPEQRGIDKLGGTMRLGARPVRIVEGTILWSLYGRELASERHRHRYEVNPTYVDRLVEAGLVVSAWSQEGYVEAVELRPRDHPFFLATQFHPEFKSRPLNPAPVFKGFVTAVARLRG.

The tract at residues 1–269 (MSPRKYVIVT…ARLVERRLFG (269 aa)) is amidoligase domain. S15 serves as a coordination point for CTP. S15 provides a ligand contact to UTP. 16–21 (SVGKGL) contacts ATP. L-glutamine is bound at residue Y56. ATP is bound at residue D73. The Mg(2+) site is built by D73 and E143. CTP contacts are provided by residues 150-152 (DIE), 190-195 (KTKPVQ), and K226. UTP contacts are provided by residues 190 to 195 (KTKPVQ) and K226. In terms of domain architecture, Glutamine amidotransferase type-1 spans 294–538 (KVAMVGKYTK…FVTAVARLRG (245 aa)). An L-glutamine-binding site is contributed by G358. C385 (nucleophile; for glutamine hydrolysis) is an active-site residue. Residues 386–389 (FGMQ), E409, and R466 each bind L-glutamine. Catalysis depends on residues H512 and E514.

The protein belongs to the CTP synthase family. Homotetramer.

It catalyses the reaction UTP + L-glutamine + ATP + H2O = CTP + L-glutamate + ADP + phosphate + 2 H(+). The enzyme catalyses L-glutamine + H2O = L-glutamate + NH4(+). It carries out the reaction UTP + NH4(+) + ATP = CTP + ADP + phosphate + 2 H(+). It functions in the pathway pyrimidine metabolism; CTP biosynthesis via de novo pathway; CTP from UDP: step 2/2. Allosterically activated by GTP, when glutamine is the substrate; GTP has no effect on the reaction when ammonia is the substrate. The allosteric effector GTP functions by stabilizing the protein conformation that binds the tetrahedral intermediate(s) formed during glutamine hydrolysis. Inhibited by the product CTP, via allosteric rather than competitive inhibition. Its function is as follows. Catalyzes the ATP-dependent amination of UTP to CTP with either L-glutamine or ammonia as the source of nitrogen. Regulates intracellular CTP levels through interactions with the four ribonucleotide triphosphates. The chain is CTP synthase from Aeropyrum pernix (strain ATCC 700893 / DSM 11879 / JCM 9820 / NBRC 100138 / K1).